The sequence spans 728 residues: Polyribonucleotide nucleotidyltransferase (728 aa).

Mg(2+) contacts are provided by Asp-489 and Asp-495. A KH domain is found at 556 to 615; it reads PKIDTIKIDVDKIKIVIGKGGETIDKIIAETGVKIDIDEEGNVSIYSSDQDAINRAKEII. One can recognise an S1 motif domain in the interval 625 to 693; it reads DEVYHAKVVR…AKGRVDASMK (69 aa). Residues 691–728 form a disordered region; it reads SMKALLPRPPKPEKSDKHHDKGHPHKKHEEAPLTQTEE. The segment covering 700-709 has biased composition (basic and acidic residues); sequence PKPEKSDKHH.

Belongs to the polyribonucleotide nucleotidyltransferase family. It depends on Mg(2+) as a cofactor.

The protein resides in the cytoplasm. It carries out the reaction RNA(n+1) + phosphate = RNA(n) + a ribonucleoside 5'-diphosphate. In terms of biological role, involved in mRNA degradation. Catalyzes the phosphorolysis of single-stranded polyribonucleotides processively in the 3'- to 5'-direction. The chain is Polyribonucleotide nucleotidyltransferase from Streptococcus gordonii (strain Challis / ATCC 35105 / BCRC 15272 / CH1 / DL1 / V288).